Consider the following 399-residue polypeptide: S-adenosylmethionine synthase (399 aa).

ATP is bound at residue H17. D19 contacts Mg(2+). Position 45 (E45) interacts with K(+). The L-methionine site is built by E58 and Q101. The interval 101-111 (QSADIAMGVDQ) is flexible loop. Residues 177 to 179 (DGK), 244 to 245 (RF), D253, 259 to 260 (RK), A276, and K280 contribute to the ATP site. D253 serves as a coordination point for L-methionine. K284 lines the L-methionine pocket.

The protein belongs to the AdoMet synthase family. As to quaternary structure, homotetramer; dimer of dimers. Requires Mg(2+) as cofactor. The cofactor is K(+).

The protein localises to the cytoplasm. It carries out the reaction L-methionine + ATP + H2O = S-adenosyl-L-methionine + phosphate + diphosphate. It participates in amino-acid biosynthesis; S-adenosyl-L-methionine biosynthesis; S-adenosyl-L-methionine from L-methionine: step 1/1. Catalyzes the formation of S-adenosylmethionine (AdoMet) from methionine and ATP. The overall synthetic reaction is composed of two sequential steps, AdoMet formation and the subsequent tripolyphosphate hydrolysis which occurs prior to release of AdoMet from the enzyme. This is S-adenosylmethionine synthase from Bacillus thuringiensis (strain Al Hakam).